We begin with the raw amino-acid sequence, 399 residues long: Elongation factor Tu (399 aa).

The 200-residue stretch at 10–209 folds into the tr-type G domain; that stretch reads KPHVNIGTIG…EVDAYIPTPE (200 aa). The segment at 19-26 is G1; that stretch reads GHVDHGKT. Residue 19–26 coordinates GTP; that stretch reads GHVDHGKT. Threonine 26 contributes to the Mg(2+) binding site. A G2 region spans residues 60 to 64; the sequence is GITIA. The segment at 81-84 is G3; that stretch reads DCPG. Residues 81–85 and 136–139 each bind GTP; these read DCPGH and NKQD. A G4 region spans residues 136 to 139; sequence NKQD. The G5 stretch occupies residues 174–176; that stretch reads SAL.

The protein belongs to the TRAFAC class translation factor GTPase superfamily. Classic translation factor GTPase family. EF-Tu/EF-1A subfamily. Monomer.

It localises to the cytoplasm. The catalysed reaction is GTP + H2O = GDP + phosphate + H(+). Functionally, GTP hydrolase that promotes the GTP-dependent binding of aminoacyl-tRNA to the A-site of ribosomes during protein biosynthesis. This chain is Elongation factor Tu, found in Helicobacter pylori (strain G27).